We begin with the raw amino-acid sequence, 77 residues long: Acyl carrier protein (77 aa).

The Carrier domain maps to 2-77 (SAIDKRVKEI…DAIDYITEHT (76 aa)). Position 37 is an O-(pantetheine 4'-phosphoryl)serine (Ser37).

The protein belongs to the acyl carrier protein (ACP) family. In terms of processing, 4'-phosphopantetheine is transferred from CoA to a specific serine of apo-ACP by AcpS. This modification is essential for activity because fatty acids are bound in thioester linkage to the sulfhydryl of the prosthetic group.

The protein resides in the cytoplasm. The protein operates within lipid metabolism; fatty acid biosynthesis. Functionally, carrier of the growing fatty acid chain in fatty acid biosynthesis. The sequence is that of Acyl carrier protein from Geobacter metallireducens (strain ATCC 53774 / DSM 7210 / GS-15).